A 218-amino-acid polypeptide reads, in one-letter code: NAD(P)H-quinone oxidoreductase subunit I (218 aa).

4Fe-4S ferredoxin-type domains lie at 55–84 (GRIH…VDWV) and 95–124 (RNYS…MTEE). Cys-64, Cys-67, Cys-70, Cys-74, Cys-104, Cys-107, Cys-110, and Cys-114 together coordinate [4Fe-4S] cluster. Residues 168–218 (EVQPHGVDPSRPRAGQRPDQVLSSLKQNAGGSAGNEGESATSTNTSKGSAE) form a disordered region. The segment covering 208-218 (TSTNTSKGSAE) has biased composition (polar residues).

It belongs to the complex I 23 kDa subunit family. NDH-1 is composed of at least 11 different subunits. [4Fe-4S] cluster serves as cofactor.

The protein localises to the cellular thylakoid membrane. It catalyses the reaction a plastoquinone + NADH + (n+1) H(+)(in) = a plastoquinol + NAD(+) + n H(+)(out). It carries out the reaction a plastoquinone + NADPH + (n+1) H(+)(in) = a plastoquinol + NADP(+) + n H(+)(out). In terms of biological role, NDH-1 shuttles electrons from an unknown electron donor, via FMN and iron-sulfur (Fe-S) centers, to quinones in the respiratory and/or the photosynthetic chain. The immediate electron acceptor for the enzyme in this species is believed to be plastoquinone. Couples the redox reaction to proton translocation, and thus conserves the redox energy in a proton gradient. The polypeptide is NAD(P)H-quinone oxidoreductase subunit I (Synechococcus sp. (strain WH7803)).